The chain runs to 228 residues: GrpE protein homolog, mitochondrial (228 aa).

A compositionally biased stretch (basic and acidic residues) spans aspartate 46–asparagine 57. The segment at aspartate 46 to glutamate 66 is disordered.

It belongs to the GrpE family. In terms of assembly, component of the PAM complex, at least composed of SSC1 (mtHsp70), MGE1, TIM44, PAM16/TIM16, PAM17 and PAM18/TIM14. Interacts with SSQ1. In terms of processing, the N-terminus is blocked.

The protein resides in the mitochondrion matrix. Its function is as follows. Essential component of the PAM complex, a complex required for the translocation of transit peptide-containing proteins from the inner membrane into the mitochondrial matrix in an ATP-dependent manner. Seems to control the nucleotide-dependent binding of SSC1 to substrate proteins and the association of SSC1 with TIM44. This Saccharomyces cerevisiae (strain ATCC 204508 / S288c) (Baker's yeast) protein is GrpE protein homolog, mitochondrial (MGE1).